A 760-amino-acid polypeptide reads, in one-letter code: Catecholate siderophore receptor Fiu (760 aa).

Positions 1–31 are cleaved as a signal peptide; that stretch reads MENNRNFPARQFHSLTFFAGLCIGITPVAQA. One can recognise a TBDR plug domain in the interval 67 to 175; that stretch reads PVADTTRTMT…PTGSINMISK (109 aa). Positions 180-760 constitute a TBDR beta-barrel domain; that stretch reads DSGIDASASI…TFLLTANMHF (581 aa). The short motif at 743 to 760 is the TonB C-terminal box element; the sequence is RYHPGEPRTFLLTANMHF.

This sequence belongs to the TonB-dependent receptor family.

Its subcellular location is the cell outer membrane. Involved in the active transport across the outer membrane of iron complexed with catecholate siderophores such as dihydroxybenzoylserine and dihydroxybenzoate. It derives its energy for transport by interacting with the trans-periplasmic membrane protein TonB. Can also transport catechol-substituted cephalosporins. Receptor for microcins M, H47 and E492. In Escherichia coli O157:H7, this protein is Catecholate siderophore receptor Fiu (fiu).